Reading from the N-terminus, the 469-residue chain is Serine hydroxymethyltransferase, cytosolic (469 aa).

Residue K248 is modified to N6-(pyridoxal phosphate)lysine.

It belongs to the SHMT family. As to quaternary structure, homotetramer. Pyridoxal 5'-phosphate serves as cofactor.

The protein resides in the cytoplasm. It carries out the reaction (6R)-5,10-methylene-5,6,7,8-tetrahydrofolate + glycine + H2O = (6S)-5,6,7,8-tetrahydrofolate + L-serine. It participates in one-carbon metabolism; tetrahydrofolate interconversion. Its function is as follows. Interconversion of serine and glycine. This Eremothecium gossypii (strain ATCC 10895 / CBS 109.51 / FGSC 9923 / NRRL Y-1056) (Yeast) protein is Serine hydroxymethyltransferase, cytosolic (SHM2).